We begin with the raw amino-acid sequence, 422 residues long: MVSKDSGRCILTTPEREVEPAACLALEMRYALDPNRQIKKRNKALQVRFKDICEAQNEQRDTQLSSGPLGEKREAKAVSCRVAYRKYMTVPARRSIPNVTKSTGVQTSPDLRKCYQTFPLDRKKGSLKGLPAADAFKSQNNGFLADSKEKSEAGPMEEPRPCSAGRIHKTTALVFHSNEHVNALGQPSGVNCAELCKSPDVLGYPEAVLQNSRPPSEEPIHQLQGRAKLDRGTLDSEEPAPLTHGRVFKTEVATVYPPAISTRAPEPGLSNSAAASQWSLCPADEEQRRAAHLNGLQASTGSAVACSTPVQYLSPECSEQPLQNQPSPTAGIGDEEHQQIVPHTEVVDLKAQLQVMENLISSSQETIKVLLGVIQELEKGEAHREGLSYRTGQDTANCDTCRNSACIIYRYVNILFPLCYSE.

The segment at 143–163 (FLADSKEKSEAGPMEEPRPCS) is disordered. The segment covering 146 to 160 (DSKEKSEAGPMEEPR) has biased composition (basic and acidic residues). Phosphoserine is present on S177. Positions 344–370 (TEVVDLKAQLQVMENLISSSQETIKVL) form a coiled coil.

It belongs to the INSYN2 family. Interacts with GPHN.

The protein localises to the postsynaptic density. In terms of biological role, component of the protein machinery at the inhibitory synapses, probably acting as a scaffold. Inhibitory synapses dampen neuronal activity through postsynaptic hyperpolarization. This synaptic inhibition is fundamental for the functioning of the central nervous system, shaping and orchestrating the flow of information through neuronal networks to generate a precise neural code. The protein is Inhibitory synaptic factor 2A of Mus musculus (Mouse).